The primary structure comprises 249 residues: Isoprenyl transferase (249 aa).

Aspartate 25 is an active-site residue. Aspartate 25 serves as a coordination point for Mg(2+). Substrate is bound by residues 26–29 (GNGR), tryptophan 30, arginine 38, histidine 42, and 70–72 (STE). Asparagine 73 acts as the Proton acceptor in catalysis. Substrate is bound by residues tryptophan 74, arginine 76, arginine 197, and 203 to 205 (RLS). Glutamate 216 serves as a coordination point for Mg(2+).

The protein belongs to the UPP synthase family. In terms of assembly, homodimer. Mg(2+) is required as a cofactor.

Functionally, catalyzes the condensation of isopentenyl diphosphate (IPP) with allylic pyrophosphates generating different type of terpenoids. This is Isoprenyl transferase from Streptococcus pyogenes serotype M6 (strain ATCC BAA-946 / MGAS10394).